A 445-amino-acid polypeptide reads, in one-letter code: MAITVRRSTMVRPAAERPRERLWNSNLDLVVPRFHTPSVYFYRRPDAGAGAGPGAAEGFFDAERMRRALAEALVPFYPMAGRLARDEDGRVEIDCSGEGVLFVEARAPGAAVDDYGDFAPTMELKRLIPAVDYSGDISSFPLLVLQVTYFKCGGVSLGVGMQHHVADGMSGLHFINSWSDLCRGAQIAVMPFIDRTLLRARDPPTPSYTHVEYQPAPAMLSSAPQALTGKPTLAPTAVDIFKLTRSELGRLRAQLPTGEGAPRFSTYAVLAAHVWRCVSLARGLPAEQPTKLYCATDGRHRLQPPLPEGYFGNVIFTATPLAEAGKVTGAVADGAAVIQGALDRMSDDYCRSALDYLETQPDLSALVRGAHTFRCPNLGLTSWVRLPIHDADFGWGRPVFMGPGGIAYEGLAFVLPSANKDGSLSIAISLQAEHMEKFRKLIADV.

This sequence belongs to the plant acyltransferase family.

It catalyses the reaction 5-hydroxyanthranilate + (E)-4-coumaroyl-CoA = avenanthramide A + CoA. The enzyme catalyses 5-hydroxyanthranilate + (E)-caffeoyl-CoA = avenanthramide C + CoA. Functionally, involved in the biosynthesis of avenanthramide phytoalexins, which are phenolic alkaloids found mainly in oats. Catalyzes the N-acylation of 5-hydroxyanthranilate with 4-coumaroyl-CoA or caffeoyl-CoA as acyl donors, forming avenanthramide A and avenanthramide C, respectively. Does not accept feruloyl-CoA as a substrate. This is Hydroxycinnamoyl-CoA:5-hydroxyanthranilate N-hydroxycinnamoyltransferase HHT4 from Avena sativa (Oat).